Here is a 213-residue protein sequence, read N- to C-terminus: Ion-translocating oxidoreductase complex subunit E (213 aa).

The next 6 helical transmembrane spans lie at 25–45, 46–66, 77–97, 100–120, 135–155, and 181–201; these read TFGL…VENG, IGMA…VSAI, PVEI…MEAF, DLYT…IVIG, IIDA…IGGI, and AMFM…MTIV.

This sequence belongs to the NqrDE/RnfAE family. The Rnf complex is probably composed of eight subunits, including RnfA, RnfB, RnfC, RnfD, RnfE and RnfG.

Its subcellular location is the cell membrane. In terms of biological role, part of a membrane-bound complex that couples electron transfer with translocation of ions across the membrane. Catalyzes Na(+) transport, most probably coupled to electron transfer from reduced ferredoxin to methanophenazine and heterodisulfide reductase. Involved in heterodisulfide reduction during methanogenesis from acetate. In Methanosarcina acetivorans (strain ATCC 35395 / DSM 2834 / JCM 12185 / C2A), this protein is Ion-translocating oxidoreductase complex subunit E.